The chain runs to 1491 residues: Chromosome partition protein MukB (1491 aa).

Position 34–41 (34–41 (GGNGAGKS)) interacts with ATP. Coiled coils occupy residues 302-418 (LIEQ…QYQQ), 488-600 (EVAR…RFES), 638-666 (ELEK…RLAS), 781-806 (RAAR…AKAS), 836-1109 (EQAL…DLRT), and 1210-1239 (VEAI…ISSD). A flexible hinge region spans residues 667–784 (PGGSNDPRLK…AIPLFGRAAR (118 aa)). Residues 1059 to 1080 (QRRRDELQERLHTSRSRKSEYE) form a disordered region.

Belongs to the SMC family. MukB subfamily. In terms of assembly, homodimerization via its hinge domain. Binds to DNA via its C-terminal region. Interacts, and probably forms a ternary complex, with MukE and MukF via its C-terminal region. The complex formation is stimulated by calcium or magnesium. Interacts with tubulin-related protein FtsZ.

It localises to the cytoplasm. The protein localises to the nucleoid. Functionally, plays a central role in chromosome condensation, segregation and cell cycle progression. Functions as a homodimer, which is essential for chromosome partition. Involved in negative DNA supercoiling in vivo, and by this means organize and compact chromosomes. May achieve or facilitate chromosome segregation by condensation DNA from both sides of a centrally located replisome during cell division. This is Chromosome partition protein MukB from Vibrio cholerae serotype O1 (strain ATCC 39541 / Classical Ogawa 395 / O395).